A 411-amino-acid polypeptide reads, in one-letter code: Carbamoyl phosphate synthase arginine-specific small chain (411 aa).

Ser50, Gly232, and Gly234 together coordinate L-glutamine. The Glutamine amidotransferase type-1 domain occupies 185–376; sequence NVALIDCGVK…FDNIEKYQLQ (192 aa). The active-site Nucleophile is Cys264. Residues Leu265, Gln268, Asn306, Gly308, and Tyr309 each contribute to the L-glutamine site. Catalysis depends on residues His349 and Glu351.

This sequence belongs to the CarA family. In terms of assembly, heterodimer composed of 2 chains; the small (or glutamine) chain promotes the hydrolysis of glutamine to ammonia, which is used by the large (or ammonia) chain to synthesize carbamoyl phosphate.

The protein resides in the cytoplasm. It catalyses the reaction hydrogencarbonate + L-glutamine + 2 ATP + H2O = carbamoyl phosphate + L-glutamate + 2 ADP + phosphate + 2 H(+). The catalysed reaction is L-glutamine + H2O = L-glutamate + NH4(+). It functions in the pathway amino-acid biosynthesis; L-arginine biosynthesis; carbamoyl phosphate from bicarbonate: step 1/1. Functionally, small subunit of the arginine-specific carbamoyl phosphate synthase (CPSase). CPSase catalyzes the formation of carbamoyl phosphate from the ammonia moiety of glutamine, carbonate, and phosphate donated by ATP, constituting the first step of 2 biosynthetic pathways, one leading to arginine and/or urea and the other to pyrimidine nucleotides. The small subunit (glutamine amidotransferase) binds and cleaves glutamine to supply the large subunit with the substrate ammonia. The protein is Carbamoyl phosphate synthase arginine-specific small chain (CPA1) of Saccharomyces cerevisiae (strain ATCC 204508 / S288c) (Baker's yeast).